We begin with the raw amino-acid sequence, 394 residues long: Actin-related protein 2-B (394 aa).

ATP is bound by residues 160–162, 214–218, and 305–310; these read GDG, RMMKE, and GGSTMY.

This sequence belongs to the actin family. ARP2 subfamily. In terms of assembly, component of the Arp2/3 complex composed of actr2/arp2, actr3/arp3, arpc1b, arpc2, arpc3, arpc4 and arpc5.

It localises to the cytoplasm. The protein localises to the cytoskeleton. The protein resides in the cell projection. It is found in the nucleus. Its function is as follows. ATP-binding component of the Arp2/3 complex, a multiprotein complex that mediates actin polymerization upon stimulation by nucleation-promoting factor (NPF). The Arp2/3 complex mediates the formation of branched actin networks in the cytoplasm, providing the force for cell motility. Seems to contact the pointed end of the daughter actin filament. In addition to its role in the cytoplasmic cytoskeleton, the Arp2/3 complex also promotes actin polymerization in the nucleus, thereby regulating gene transcription and repair of damaged DNA. The Arp2/3 complex promotes homologous recombination (HR) repair in response to DNA damage by promoting nuclear actin polymerization, leading to drive motility of double-strand breaks (DSBs). The chain is Actin-related protein 2-B (actr2b) from Danio rerio (Zebrafish).